The primary structure comprises 261 residues: Small ribosomal subunit protein eS1 (261 aa).

Residues 1–18 are compositionally biased toward basic residues; sequence MAVGKNKRISKGKKGGKK. Residues 1-21 are disordered; the sequence is MAVGKNKRISKGKKGGKKKAT.

The protein belongs to the eukaryotic ribosomal protein eS1 family. In terms of assembly, component of the small ribosomal subunit. Mature ribosomes consist of a small (40S) and a large (60S) subunit. The 40S subunit contains about 33 different proteins and 1 molecule of RNA (18S). The 60S subunit contains about 49 different proteins and 3 molecules of RNA (25S, 5.8S and 5S).

The protein localises to the cytoplasm. The polypeptide is Small ribosomal subunit protein eS1 (cyc07) (Daucus carota (Wild carrot)).